The following is a 466-amino-acid chain: 3-isopropylmalate dehydratase large subunit (466 aa).

[4Fe-4S] cluster contacts are provided by Cys-347, Cys-407, and Cys-410.

Belongs to the aconitase/IPM isomerase family. LeuC type 1 subfamily. In terms of assembly, heterodimer of LeuC and LeuD. Requires [4Fe-4S] cluster as cofactor.

It carries out the reaction (2R,3S)-3-isopropylmalate = (2S)-2-isopropylmalate. It functions in the pathway amino-acid biosynthesis; L-leucine biosynthesis; L-leucine from 3-methyl-2-oxobutanoate: step 2/4. Functionally, catalyzes the isomerization between 2-isopropylmalate and 3-isopropylmalate, via the formation of 2-isopropylmaleate. The sequence is that of 3-isopropylmalate dehydratase large subunit from Blochmanniella pennsylvanica (strain BPEN).